A 239-amino-acid chain; its full sequence is Proteasome activator complex subunit 2 (239 aa).

A2 is subject to N-acetylalanine. S10 carries the post-translational modification Phosphoserine. Residues 65 to 86 (DIPIPDPPPKDDEMETDKQEKK) form a disordered region. The segment covering 72–86 (PPKDDEMETDKQEKK) has biased composition (basic and acidic residues).

The protein belongs to the PA28 family. In terms of assembly, heterodimer of PSME1 and PSME2, which forms a hexameric ring.

Functionally, implicated in immunoproteasome assembly and required for efficient antigen processing. The PA28 activator complex enhances the generation of class I binding peptides by altering the cleavage pattern of the proteasome. In Sus scrofa (Pig), this protein is Proteasome activator complex subunit 2 (PSME2).